Here is a 158-residue protein sequence, read N- to C-terminus: Mitotic-spindle organizing protein 2 (158 aa).

A Phosphoserine modification is found at Ser-34. The interval 81–158 (AGQRVASDSQ…PGRSPPRSGT (78 aa)) is disordered. The span at 110–119 (KGGGALGGGP) shows a compositional bias: gly residues. Phosphoserine is present on Ser-152.

It belongs to the MOZART2 family. Associates with the gamma-tubulin ring complex (gTuRC) consisting of TUBGCP2, TUBGCP3, TUBGCP4, TUBGCP5 and TUBGCP6 and gamma-tubulin TUBG1 or TUBG2; within the complex, interacts with TUBGCP2; the interaction plays a role in gTuRC activation.

It is found in the cytoplasm. The protein resides in the cytoskeleton. The protein localises to the microtubule organizing center. Its subcellular location is the centrosome. It localises to the spindle. In terms of biological role, required for the recruitment and the assembly of the gamma-tubulin ring complex (gTuRC) at the centrosome. The gTuRC regulates the minus-end nucleation of alpha-beta tubulin heterodimers that grow into microtubule protafilaments, a critical step in centrosome duplication and spindle formation. The sequence is that of Mitotic-spindle organizing protein 2 (MZT2) from Bos taurus (Bovine).